The sequence spans 940 residues: Translation initiation factor IF-2 (940 aa).

4 disordered regions span residues 116–137 (PEQEQLESTSVAEIPESVSSDT), 151–196 (EVEA…EQRS), 210–294 (AVRK…VKKV), and 318–346 (HSAPKSKKGGQNNNSSNSGSRPLIKVANR). Residues 121-137 (LESTSVAEIPESVSSDT) show a composition bias toward polar residues. Acidic residues predominate over residues 159 to 180 (PEPEVEATPEPEVEDVVAEEAE). A compositionally biased stretch (low complexity) spans 181 to 193 (PAAAEPAPAPVVE). Residues 213–239 (KKAEEEAEVARRKADAEKAEAAAKQKA) show a composition bias toward basic and acidic residues. Residues 282–294 (KHNKKAGKAVKKV) are compositionally biased toward basic residues. A compositionally biased stretch (low complexity) spans 326–337 (GGQNNNSSNSGS). The region spanning 441-610 (ARAPVVTVMG…ALQAELLELS (170 aa)) is the tr-type G domain. Positions 450–457 (GHVDHGKT) are G1. 450–457 (GHVDHGKT) serves as a coordination point for GTP. A G2 region spans residues 475-479 (GITQH). The G3 stretch occupies residues 496-499 (DTPG). GTP contacts are provided by residues 496 to 500 (DTPGH) and 550 to 553 (NKID). The segment at 550–553 (NKID) is G4. Residues 586–588 (SAQ) form a G5 region.

Belongs to the TRAFAC class translation factor GTPase superfamily. Classic translation factor GTPase family. IF-2 subfamily.

Its subcellular location is the cytoplasm. Functionally, one of the essential components for the initiation of protein synthesis. Protects formylmethionyl-tRNA from spontaneous hydrolysis and promotes its binding to the 30S ribosomal subunits. Also involved in the hydrolysis of GTP during the formation of the 70S ribosomal complex. This chain is Translation initiation factor IF-2, found in Teredinibacter turnerae (strain ATCC 39867 / T7901).